The following is a 74-amino-acid chain: Conotoxin AbVII (74 aa).

The signal sequence occupies residues 1–17 (VLIIAVLFLTACQLTTA). Positions 18–40 (ETSSRGKQKHRALRSTDKNSRMT) are excised as a propeptide. A disordered region spans residues 19–41 (TSSRGKQKHRALRSTDKNSRMTK). Disulfide bonds link C43/C57, C50/C61, and C56/C68.

It belongs to the conotoxin O1 superfamily. As to expression, expressed by the venom duct.

The protein localises to the secreted. This is Conotoxin AbVII from Conus abbreviatus (Abbreviated cone).